The sequence spans 210 residues: Small heat shock protein hspG6 (210 aa).

Residues 34 to 210 (KTIIDKLPPM…YSNTIKININ (177 aa)) enclose the sHSP domain. The interval 93-151 (VIEKSTSSSTLDSKEDEPSIEEFEDDIKPKSKSDNTTVSTTTTATTKENKEDENKTKST) is disordered. Residues 126–138 (DNTTVSTTTTATT) are compositionally biased toward low complexity. Residues 139 to 151 (KENKEDENKTKST) are compositionally biased toward basic and acidic residues.

Belongs to the small heat shock protein (HSP20) family.

The chain is Small heat shock protein hspG6 (hspG6) from Dictyostelium discoideum (Social amoeba).